A 466-amino-acid chain; its full sequence is Soluble pyridine nucleotide transhydrogenase (466 aa).

36-45 (ERYHNVGGGC) provides a ligand contact to FAD.

The protein belongs to the class-I pyridine nucleotide-disulfide oxidoreductase family. FAD serves as cofactor.

The protein localises to the cytoplasm. The catalysed reaction is NAD(+) + NADPH = NADH + NADP(+). Functionally, conversion of NADPH, generated by peripheral catabolic pathways, to NADH, which can enter the respiratory chain for energy generation. The protein is Soluble pyridine nucleotide transhydrogenase of Salmonella paratyphi C (strain RKS4594).